Here is a 113-residue protein sequence, read N- to C-terminus: Cell cycle protein GpsB (113 aa).

The stretch at 36–65 (IKDYETYAALVKSLRQEIADLKEELARKPQ) forms a coiled coil. The disordered stretch occupies residues 61-82 (ARKPQVSSAPSPSHPDPIDVAA).

The protein belongs to the GpsB family. As to quaternary structure, forms polymers through the coiled coil domains. Interacts with PBP1, MreC and EzrA.

The protein resides in the cytoplasm. Functionally, divisome component that associates with the complex late in its assembly, after the Z-ring is formed, and is dependent on DivIC and PBP2B for its recruitment to the divisome. Together with EzrA, is a key component of the system that regulates PBP1 localization during cell cycle progression. Its main role could be the removal of PBP1 from the cell pole after pole maturation is completed. Also contributes to the recruitment of PBP1 to the division complex. Not essential for septum formation. This chain is Cell cycle protein GpsB, found in Streptococcus pneumoniae (strain Hungary19A-6).